Consider the following 321-residue polypeptide: MGEWTILERLLEAAVQQHSTMIGRILLTVVVIFRILIVAIVGETVYDDEQTMFVCNTLQPGCNQACYDRAFPISHIRYWVFQIIMVCTPSLCFITYSVHQSAKQRERRYSTVFLALDRDPPESMGGPGGTGGGGSGGGKREDKKLQNAIVNGVLQNTENTSKETEPDCLEVKELTPHPSGLRTASRSKLRRQEGISRFYIIQVVFRNALEIGFLVGQYFLYGFSVPGLYECDRYPCIKEVECYVSRPTEKTVFLVFMFAVSGICVVLNLAELNHLGWRKIKLAVRGAQAKRKSVYEIRNKDLPRVSVPNFGRTQSSDSAYV.

Residues Met1–Ser19 lie on the Cytoplasmic side of the membrane. The helical transmembrane segment at Thr20–Gly42 threads the bilayer. Over Glu43–His75 the chain is Extracellular. A helical membrane pass occupies residues Ile76 to Val98. Residues His99–Arg197 are Cytoplasmic-facing. Residues Asp117–Glu141 are disordered. The segment covering Gly125–Gly137 has biased composition (gly residues). A helical membrane pass occupies residues Phe198–Leu220. The Extracellular portion of the chain corresponds to Tyr221–Val252. Residues Phe253 to Leu275 traverse the membrane as a helical segment. Residues Gly276 to Val321 are Cytoplasmic-facing.

It belongs to the connexin family. Delta-type subfamily. A connexon is composed of a hexamer of connexins.

It localises to the cell membrane. It is found in the cell junction. The protein resides in the gap junction. One gap junction consists of a cluster of closely packed pairs of transmembrane channels, the connexons, through which materials of low MW diffuse from one cell to a neighboring cell. In Bos taurus (Bovine), this protein is Gap junction delta-2 protein (GJD2).